The chain runs to 202 residues: Small ribosomal subunit protein uS4 (202 aa).

Residues 22–43 (TRKNARRAYPPGQHGQNRRKRS) are disordered. One can recognise an S4 RNA-binding domain in the interval 90–152 (MRLDNTVFRL…DKSRKLVQAN (63 aa)).

Belongs to the universal ribosomal protein uS4 family. Part of the 30S ribosomal subunit. Contacts protein S5. The interaction surface between S4 and S5 is involved in control of translational fidelity.

One of the primary rRNA binding proteins, it binds directly to 16S rRNA where it nucleates assembly of the body of the 30S subunit. Functionally, with S5 and S12 plays an important role in translational accuracy. This is Small ribosomal subunit protein uS4 from Gloeothece citriformis (strain PCC 7424) (Cyanothece sp. (strain PCC 7424)).